The primary structure comprises 262 residues: Lysosomal-associated transmembrane protein 5 (262 aa).

Transmembrane regions (helical) follow at residues 19–39 (IATT…FIEH), 64–84 (ISSF…LIGV), 92–112 (LLPF…TLLG), 134–154 (FPLM…LCSS), and 184–204 (FIKM…FKVY). Y259 carries the post-translational modification Phosphotyrosine.

It belongs to the LAPTM4/LAPTM5 transporter family. In terms of assembly, binds to ubiquitin. As to expression, preferentially expressed in adult hematopoietic tissues. High levels in lymphoid and myeloid tissues. Highly expressed in peripheral blood leukocytes, thymus, spleen and lung, followed by placenta, liver and kidney.

It is found in the lysosome membrane. Functionally, may have a special functional role during embryogenesis and in adult hematopoietic cells. The chain is Lysosomal-associated transmembrane protein 5 (LAPTM5) from Homo sapiens (Human).